The sequence spans 265 residues: Deoxycytidine kinase 1 (265 aa).

30 to 38 (GNIAAGKST) is a binding site for ATP. Residues glutamate 55, tyrosine 88, and glutamine 99 each contribute to the substrate site. Catalysis depends on glutamate 129, which acts as the Proton acceptor. Substrate-binding residues include arginine 130 and aspartate 135. ATP is bound at residue 190–194 (RVYTR). Substrate is bound at residue glutamate 199. Residue 242-244 (EDF) coordinates ATP.

This sequence belongs to the DCK/DGK family. Homodimer.

The protein localises to the nucleus. The enzyme catalyses 2'-deoxycytidine + a ribonucleoside 5'-triphosphate = dCMP + a ribonucleoside 5'-diphosphate + H(+). The catalysed reaction is 2'-deoxyguanosine + ATP = dGMP + ADP + H(+). It catalyses the reaction 2'-deoxyadenosine + ATP = dAMP + ADP + H(+). Functionally, phosphorylates the deoxyribonucleosides deoxyadenosine, deoxycytidine and deoxyguanosine with highest activity against deoxycytidine followed by deadenosine and deoxyguanosine. Shows only very minor activity against deoxyuridine and deoxythymidine. The protein is Deoxycytidine kinase 1 of Xenopus laevis (African clawed frog).